We begin with the raw amino-acid sequence, 567 residues long: DNA ligase (567 aa).

ATP is bound at residue Glu260. Residue Lys262 is the N6-AMP-lysine intermediate of the active site. Residues Arg267, Arg282, Glu312, Phe352, Arg427, and Lys433 each coordinate ATP.

This sequence belongs to the ATP-dependent DNA ligase family. Requires Mg(2+) as cofactor.

It carries out the reaction ATP + (deoxyribonucleotide)n-3'-hydroxyl + 5'-phospho-(deoxyribonucleotide)m = (deoxyribonucleotide)n+m + AMP + diphosphate.. Functionally, DNA ligase that seals nicks in double-stranded DNA during DNA replication, DNA recombination and DNA repair. This Methanococcoides burtonii (strain DSM 6242 / NBRC 107633 / OCM 468 / ACE-M) protein is DNA ligase.